Here is a 475-residue protein sequence, read N- to C-terminus: MGGARFINFIKPLSSLLPEVEGPKTHLELVEKLGWMAGCVVVYQILSIIPVYGAEKTDTLDPINNFRVLDGSSASGLMITGLAPIYLSSFLLQILASKKKIAVNFNLIIDRVLFQNAQKVVSALLYLILAVTYVSSGYYGSFSDLGIFRFIMLILQIFLPGIVCIYLCEIIEKGHGLGSGPVLLLGSHILGNIMWDVLSLHRYPVNESGDSQYQGALVGFAFNLFSFKNKFSSLRSILFRSEGLSFVQFLVCIAVFATFMYTLNIRIDVPIRSSRVRGVRQNFPLKLLYTSVIPLIYFYSILSHLLVFAYALYSLCPNSLITRLLVQYSPIDTFAEHKLQLVGGLVYFLYPPLGLSEALLHPVHTVIYTITLICITIYFSLLWMNATAGGPRDVLLFFKENQLVIAGYREATMLKELEKIIPIAAKLSAFFVSILSVIAGIFASTFGVGVLIASALVYASFEMIVGANTSLGNGN.

This is an uncharacterized protein from Schizosaccharomyces pombe (strain 972 / ATCC 24843) (Fission yeast).